Here is a 569-residue protein sequence, read N- to C-terminus: Arginine--tRNA ligase (569 aa).

The 'HIGH' region signature appears at alanine 128–histidine 138.

Belongs to the class-I aminoacyl-tRNA synthetase family. Monomer.

It is found in the cytoplasm. It carries out the reaction tRNA(Arg) + L-arginine + ATP = L-arginyl-tRNA(Arg) + AMP + diphosphate. This Paracidovorax citrulli (strain AAC00-1) (Acidovorax citrulli) protein is Arginine--tRNA ligase.